The following is a 309-amino-acid chain: Protease HtpX homolog (309 aa).

The next 2 helical transmembrane spans lie at 7-27 (AILLAGLTALFMGVGYLIGGA) and 28-48 (SGAMIALVVAAATNIFAYWNS). His-130 lines the Zn(2+) pocket. Glu-131 is a catalytic residue. Zn(2+) is bound at residue His-134. Helical transmembrane passes span 145–165 (VTATIAGAVSMLAQFGMFFGG) and 173–193 (GLGVIGSIAMMILAPIAAMLV). Glu-202 provides a ligand contact to Zn(2+).

The protein belongs to the peptidase M48B family. The cofactor is Zn(2+).

It is found in the cell inner membrane. The polypeptide is Protease HtpX homolog (Rhodopseudomonas palustris (strain BisA53)).